We begin with the raw amino-acid sequence, 379 residues long: Protein RecA (379 aa).

The tract at residues Met1–Glu24 is disordered. Positions Ser7 to Leu16 are enriched in polar residues. Residue Gly84 to Thr91 participates in ATP binding.

Belongs to the RecA family.

The protein resides in the cytoplasm. Functionally, can catalyze the hydrolysis of ATP in the presence of single-stranded DNA, the ATP-dependent uptake of single-stranded DNA by duplex DNA, and the ATP-dependent hybridization of homologous single-stranded DNAs. It interacts with LexA causing its activation and leading to its autocatalytic cleavage. The polypeptide is Protein RecA (Prochlorococcus marinus (strain MIT 9303)).